A 189-amino-acid chain; its full sequence is Large ribosomal subunit protein uL5 (189 aa).

The protein belongs to the universal ribosomal protein uL5 family. In terms of assembly, part of the 50S ribosomal subunit; part of the 5S rRNA/L5/L18/L25 subcomplex. Contacts the 5S rRNA and the P site tRNA. Forms a bridge to the 30S subunit in the 70S ribosome.

This is one of the proteins that bind and probably mediate the attachment of the 5S RNA into the large ribosomal subunit, where it forms part of the central protuberance. In the 70S ribosome it contacts protein S13 of the 30S subunit (bridge B1b), connecting the 2 subunits; this bridge is implicated in subunit movement. Contacts the P site tRNA; the 5S rRNA and some of its associated proteins might help stabilize positioning of ribosome-bound tRNAs. The sequence is that of Large ribosomal subunit protein uL5 from Salinispora tropica (strain ATCC BAA-916 / DSM 44818 / JCM 13857 / NBRC 105044 / CNB-440).